The primary structure comprises 328 residues: Beta-ketoacyl-[acyl-carrier-protein] synthase III (328 aa).

Active-site residues include Cys-113 and His-252. Positions 253-257 (QANLR) are ACP-binding. Asn-282 is a catalytic residue.

This sequence belongs to the thiolase-like superfamily. FabH family. Homodimer.

It localises to the cytoplasm. It catalyses the reaction malonyl-[ACP] + acetyl-CoA + H(+) = 3-oxobutanoyl-[ACP] + CO2 + CoA. It functions in the pathway lipid metabolism; fatty acid biosynthesis. Its function is as follows. Catalyzes the condensation reaction of fatty acid synthesis by the addition to an acyl acceptor of two carbons from malonyl-ACP. Catalyzes the first condensation reaction which initiates fatty acid synthesis and may therefore play a role in governing the total rate of fatty acid production. Possesses both acetoacetyl-ACP synthase and acetyl transacylase activities. Its substrate specificity determines the biosynthesis of branched-chain and/or straight-chain of fatty acids. The polypeptide is Beta-ketoacyl-[acyl-carrier-protein] synthase III (Campylobacter fetus subsp. fetus (strain 82-40)).